We begin with the raw amino-acid sequence, 116 residues long: Large ribosomal subunit protein bL19 (116 aa).

It belongs to the bacterial ribosomal protein bL19 family.

Functionally, this protein is located at the 30S-50S ribosomal subunit interface and may play a role in the structure and function of the aminoacyl-tRNA binding site. This chain is Large ribosomal subunit protein bL19, found in Ectopseudomonas mendocina (strain ymp) (Pseudomonas mendocina).